A 225-amino-acid chain; its full sequence is Paired immunoglobulin-like type 2 receptor beta-2 (225 aa).

Positions M1–S31 are cleaved as a signal peptide. Residues A32–M195 are Extracellular-facing. N-linked (GlcNAc...) asparagine glycans are attached at residues N90, N107, and N160. The helical transmembrane segment at V196–L216 threads the bilayer. The Cytoplasmic segment spans residues R217–A225.

Its subcellular location is the membrane. Its function is as follows. Paired receptors consist of highly related activating and inhibitory receptors and are widely involved in the regulation of the immune system. PILRB2 is probably a cellular signaling activating receptor that associates with ITAM-bearing adapter molecules on the cell surface. This Mus musculus (Mouse) protein is Paired immunoglobulin-like type 2 receptor beta-2 (Pilrb2).